Reading from the N-terminus, the 849-residue chain is Ribosome biogenesis protein ERB1 (849 aa).

Positions 1 to 130 (MARNSIKKSP…PKDDDLSRIN (130 aa)) are disordered. Composition is skewed to acidic residues over residues 29 to 44 (EAEEDSNDEESEDELN) and 51 to 123 (ASDD…EPKD). The interval 286-405 (RFVPSKHEAK…LRQVPGYQDS (120 aa)) is required for interaction with NOP7. The required for interaction with YTM1 stretch occupies residues 405 to 441 (SVRERFERSLDLYLAPRVRHNKLNIDPDSLIPDLPSP). WD repeat units follow at residues 457-496 (GHTGKIRTISIDPQGLWLATGSDDGSVRIWEILTGRQVYK) and 505-545 (NNED…FDIE). The segment covering 569-581 (KISSQKEEDNKES) has biased composition (basic and acidic residues). Residues 569–619 (KISSQKEEDNKESDNEDEDEEEDNDDDDDDDEPETSSTVEPKKEVAKWYPP) are disordered. Residues 582–602 (DNEDEDEEEDNDDDDDDDEPE) show a composition bias toward acidic residues. WD repeat units follow at residues 633–675 (QCRK…SQSP), 678–716 (KSKGIIMDAKFHPFKPQLFVASQRQIKIYDLAQQVLLKK), 719–758 (PGVRLLSTIDIHPRGDNLIAGSYDKRVLWHDLDLSATPYK), 762–802 (YHEK…DLMT), and 818–849 (INQIGILDLIWHPKEPWLFSAGADGTARLWTT).

It belongs to the WD repeat BOP1/ERB1 family. In terms of assembly, component of the NOP7 complex, composed of ERB1, NOP7 and YTM1. The complex is held together by ERB1, which interacts with NOP7 via its N-terminal domain and with YTM1 via a high-affinity interaction between the seven-bladed beta-propeller domains of the 2 proteins. The NOP7 complex associates with the 66S pre-ribosome.

The protein resides in the nucleus. It localises to the nucleolus. The protein localises to the nucleoplasm. In terms of biological role, component of the NOP7 complex, which is required for maturation of the 25S and 5.8S ribosomal RNAs and formation of the 60S ribosome. The sequence is that of Ribosome biogenesis protein ERB1 from Candida albicans (strain SC5314 / ATCC MYA-2876) (Yeast).